The sequence spans 688 residues: Polyphosphate kinase (688 aa).

Position 45 (Asn45) interacts with ATP. 2 residues coordinate Mg(2+): Arg375 and Arg405. A PLD phosphodiesterase domain is found at Pro430–Thr464. His435 serves as the catalytic Phosphohistidine intermediate. 3 residues coordinate ATP: Tyr468, Arg564, and His592.

The protein belongs to the polyphosphate kinase 1 (PPK1) family. Mg(2+) is required as a cofactor. Post-translationally, an intermediate of this reaction is the autophosphorylated ppk in which a phosphate is covalently linked to a histidine residue through a N-P bond.

The enzyme catalyses [phosphate](n) + ATP = [phosphate](n+1) + ADP. In terms of biological role, catalyzes the reversible transfer of the terminal phosphate of ATP to form a long-chain polyphosphate (polyP). The protein is Polyphosphate kinase of Escherichia coli O6:H1 (strain CFT073 / ATCC 700928 / UPEC).